The primary structure comprises 763 residues: Phosphoglycerol transferase I (763 aa).

Transmembrane regions (helical) follow at residues 4–19 (LLSFALFLASVLIYAW), 26–48 (WWFAATLTVLGLFVVLNITLFAS), 76–98 (YILPGIGIVLGLTAVFGALGWIL), and 105–127 (PHHFGYSLLALLLALGSVDASPA).

It belongs to the OpgB family.

The protein resides in the cell inner membrane. The enzyme catalyses a phosphatidylglycerol + a membrane-derived-oligosaccharide D-glucose = a 1,2-diacyl-sn-glycerol + a membrane-derived-oligosaccharide 6-(glycerophospho)-D-glucose.. It participates in glycan metabolism; osmoregulated periplasmic glucan (OPG) biosynthesis. Its function is as follows. Transfers a phosphoglycerol residue from phosphatidylglycerol to the membrane-bound nascent glucan backbones. The sequence is that of Phosphoglycerol transferase I from Escherichia coli O157:H7.